The following is a 655-amino-acid chain: p-hydroxybenzoic acid efflux pump subunit AaeB (655 aa).

11 helical membrane-spanning segments follow: residues 13–33 (FAVK…HFQL), 38–58 (WAVL…GGEP), 69–89 (LRII…IAMI), 93–113 (LLMI…SSLV), 121–141 (WGLA…EPLL), 152–172 (EIVI…PRSI), 370–390 (LFWL…IAVV), 407–427 (FIYG…VIIP), 431–451 (QSML…GIEV), 459–479 (MGAL…TFHF), and 482–502 (FLDS…VILL).

It belongs to the aromatic acid exporter ArAE (TC 2.A.85) family.

The protein resides in the cell inner membrane. Forms an efflux pump with AaeA. Could function as a metabolic relief valve, allowing to eliminate certain compounds when they accumulate to high levels in the cell. This Escherichia coli (strain K12 / MC4100 / BW2952) protein is p-hydroxybenzoic acid efflux pump subunit AaeB.